Consider the following 165-residue polypeptide: SsrA-binding protein (165 aa).

Residues 1 to 10 are compositionally biased toward basic residues; sequence MSKKGKKKSK. Positions 1 to 21 are disordered; that stretch reads MSKKGKKKSKNNSSVDGNRRL.

This sequence belongs to the SmpB family.

The protein resides in the cytoplasm. Functionally, required for rescue of stalled ribosomes mediated by trans-translation. Binds to transfer-messenger RNA (tmRNA), required for stable association of tmRNA with ribosomes. tmRNA and SmpB together mimic tRNA shape, replacing the anticodon stem-loop with SmpB. tmRNA is encoded by the ssrA gene; the 2 termini fold to resemble tRNA(Ala) and it encodes a 'tag peptide', a short internal open reading frame. During trans-translation Ala-aminoacylated tmRNA acts like a tRNA, entering the A-site of stalled ribosomes, displacing the stalled mRNA. The ribosome then switches to translate the ORF on the tmRNA; the nascent peptide is terminated with the 'tag peptide' encoded by the tmRNA and targeted for degradation. The ribosome is freed to recommence translation, which seems to be the essential function of trans-translation. The polypeptide is SsrA-binding protein (Prochlorococcus marinus (strain NATL1A)).